We begin with the raw amino-acid sequence, 133 residues long: MNYMPGTASLIEDIDKKHLVLLRDGRTLIGFLRSIDQFANLVLHQTVERIHVGKKYGDIPRGIFVVRGENVVLLGEIDLEKESDTPLQQVSIEEILEEQRVEQQTKLEAEKLKVQALKDRGLSIPRADTLEEY.

Residues 5 to 80 (PGTASLIEDI…VVLLGEIDLE (76 aa)) form the Sm domain. At serine 123 the chain carries Phosphoserine. Phosphothreonine is present on threonine 129.

It belongs to the snRNP Sm proteins family. As to quaternary structure, interacts with SLBP; interaction with SLBP occurs when histone mRNA is being rapidly degraded during the S phase. LSm subunits form a heteromer with a donut shape.

The protein resides in the cytoplasm. Its subcellular location is the P-body. Functionally, plays a role in the degradation of histone mRNAs, the only eukaryotic mRNAs that are not polyadenylated. Probably also part of an LSm subunits-containing complex involved in the general process of mRNA degradation. In Bos taurus (Bovine), this protein is U6 snRNA-associated Sm-like protein LSm1 (LSM1).